The primary structure comprises 221 residues: Adenylate kinase (221 aa).

ATP is bound at residue 10-15 (GAGKGT). An NMP region spans residues 30–59 (STGDMLRAAVKAGTPLGLEAKRFMDAGELV). Residues T31, R36, 57–59 (ELV), 85–88 (GFPR), and Q92 each bind AMP. Residues 122–159 (GRRSHAASGRTYHVKFNPPKVEGLDDVTGEPLIQRDDD) are LID. ATP-binding positions include R123 and 132–133 (TY). Residues R156 and R167 each coordinate AMP. G207 serves as a coordination point for ATP.

Belongs to the adenylate kinase family. As to quaternary structure, monomer.

Its subcellular location is the cytoplasm. It carries out the reaction AMP + ATP = 2 ADP. It functions in the pathway purine metabolism; AMP biosynthesis via salvage pathway; AMP from ADP: step 1/1. Catalyzes the reversible transfer of the terminal phosphate group between ATP and AMP. Plays an important role in cellular energy homeostasis and in adenine nucleotide metabolism. The protein is Adenylate kinase of Paraburkholderia xenovorans (strain LB400).